Consider the following 275-residue polypeptide: Large ribosomal subunit protein uL2 (275 aa).

A compositionally biased stretch (polar residues) spans 35-49 (DSQSSTAGRNNNGRI). Disordered stretches follow at residues 35-59 (DSQS…GGHK) and 224-275 (AMNP…RHKR). The span at 50–59 (TTRHKGGGHK) shows a compositional bias: basic residues.

This sequence belongs to the universal ribosomal protein uL2 family. As to quaternary structure, part of the 50S ribosomal subunit. Forms a bridge to the 30S subunit in the 70S ribosome.

Its function is as follows. One of the primary rRNA binding proteins. Required for association of the 30S and 50S subunits to form the 70S ribosome, for tRNA binding and peptide bond formation. It has been suggested to have peptidyltransferase activity; this is somewhat controversial. Makes several contacts with the 16S rRNA in the 70S ribosome. The chain is Large ribosomal subunit protein uL2 from Burkholderia orbicola (strain AU 1054).